A 1404-amino-acid chain; its full sequence is Proteoglycan 4 (1404 aa).

A signal peptide spans 1 to 24 (MAWKTLPIYLLLLLSVFVIQQVSS). 2 consecutive SMB domains span residues 26 to 69 (DLSS…AELS) and 66 to 108 (AELS…AEVH). Cystine bridges form between C30-C34, C30-C46, C34-C64, C44-C46, C44-C57, C50-C56, C57-C64, C70-C74, C70-C86, C74-C104, C84-C86, C84-C97, C90-C96, and C97-C104. Residues 111 to 966 (TSPPSSKKAP…TTQVTSTTTQ (856 aa)) are disordered. 2 O-linked (GalNAc...) serine glycosylation sites follow: S123 and S136. Residues 132-146 (TTKRSPKPPNKKKTK) are compositionally biased toward basic residues. The segment covering 166–177 (SSSSSSSSSSSS) has biased composition (low complexity). Residues 193–205 (ELQKKLKVKDNKK) are compositionally biased toward basic and acidic residues. A glycan (N-linked (GlcNAc...) asparagine) is linked at N206. Polar residues predominate over residues 235-252 (TPDTSTTQHNKVSTSPKI). O-linked (GalNAc...) threonine glycans are attached at residues T240 and T253. The span at 266-276 (PNSDTSKETSL) shows a compositional bias: polar residues. Residues T277, T291, and T305 are each glycosylated (O-linked (GalNAc...) threonine). S306 is a glycosylation site (O-linked (GalNAc...) serine). O-linked (GalNAc...) threonine glycosylation is present at T310. S317 is a glycosylation site (O-linked (GalNAc...) serine). O-linked (GalNAc...) threonine glycans are attached at residues T324, T332, and T338. Low complexity-rich tracts occupy residues 329–348 (AKPTPKAETTTKGPALTTPK) and 356–405 (KEPA…KEPA). Copy 1 of the repeat occupies 348 to 355 (KEPTPTTP). The segment at 348-855 (KEPTPTTPKE…TPETPPPTTS (508 aa)) is 59 X 8 AA repeats of K-X-P-X-P-T-T-X. The stretch at 356–363 (KEPASTTP) is one 2; approximate repeat. The stretch at 364 to 371 (KEPTPTTI) is repeat 3. O-linked (GalNAc...) threonine glycosylation occurs at T367. The stretch at 372–378 (KSAPTTP) is one 4; approximate repeat. S373 is a glycosylation site (O-linked (GalNAc...) serine). T376, T384, and T385 each carry an O-linked (GalNAc...) threonine glycan. Copy 5 of the repeat occupies 379–386 (KEPAPTTT). One copy of the 6; approximate repeat lies at 387–393 (KSAPTTP). S388 carries an O-linked (GalNAc...) serine glycan. O-linked (GalNAc...) threonine glycosylation is found at T391, T399, T400, T407, T408, T415, and T423. Repeat copies occupy residues 394-401 (KEPAPTTT), 402-409 (KEPAPTTP), 410-417 (KEPAPTTT), and 418-425 (KEPAPTTT). The span at 413-431 (APTTTKEPAPTTTKSAPTT) shows a compositional bias: low complexity. The 11; approximate repeat unit spans residues 426-432 (KSAPTTP). A glycan (O-linked (GalNAc...) serine) is linked at S427. Residues T430, T438, T439, T446, T447, T454, and T455 are each glycosylated (O-linked (GalNAc...) threonine). 2 stretches are compositionally biased toward pro residues: residues 432 to 467 (PKEPAPTTPKKPAPTTPKEPAPTTPKEPTPTTPKEP) and 476 to 506 (PTTPKEPAPTAPKKPAPTTPKEPAPTTPKEP). Repeat copies occupy residues 433–440 (KEPAPTTP), 441–448 (KKPAPTTP), 449–456 (KEPAPTTP), and 457–464 (KEPTPTTP). One copy of the 16; approximate repeat lies at 465–471 (KEPAPTT). Residues 472–479 (KEPAPTTP) form repeat 17. 8 O-linked (GalNAc...) threonine glycosylation sites follow: T477, T478, T485, T493, T494, T501, T502, and T509. The 18; approximate repeat unit spans residues 480–487 (KEPAPTAP). A 19; approximate repeat occupies 488-495 (KKPAPTTP). Tandem repeats lie at residues 496–503 (KEPAPTTP), 504–511 (KEPAPTTT), 512–519 (KEPSPTTP), and 520–527 (KEPAPTTT). Positions 523-561 (APTTTKSAPTTTKEPAPTTTKSAPTTPKEPSPTTTKEPA) are enriched in low complexity. T525 carries an O-linked (GalNAc...) threonine glycan. A 24; approximate repeat occupies 528-534 (KSAPTTT). A glycan (O-linked (GalNAc...) serine) is linked at S529. 3 O-linked (GalNAc...) threonine glycosylation sites follow: T532, T540, and T541. Repeat 25 spans residues 535 to 542 (KEPAPTTT). A 26; approximate repeat occupies 543 to 549 (KSAPTTP). Repeat copies occupy residues 550-557 (KEPSPTTT), 558-565 (KEPAPTTP), 566-573 (KEPAPTTP), 574-581 (KKPAPTTP), 582-589 (KEPAPTTP), and 590-597 (KEPAPTTT). Residue S553 is glycosylated (O-linked (GalNAc...) serine). Residues T555, T563, T564, T571, T572, T579, T580, T587, T588, T595, T603, T604, T611, T612, T616, T619, and T627 are each glycosylated (O-linked (GalNAc...) threonine). Positions 562–592 (PTTPKEPAPTTPKKPAPTTPKEPAPTTPKEP) are enriched in pro residues. A 33; approximate repeat occupies 598–605 (KKPAPTTP). Pro residues predominate over residues 602–611 (PTTPKEPAPT). Copy 34 of the repeat occupies 606 to 613 (KEPAPTTP). Over residues 612-636 (TPKETAPTTPKKLTPTTPEKLAPTT) the composition is skewed to low complexity. The stretch at 614–621 (KETAPTTP) is one 35; approximate repeat. Residues 622-629 (KKLTPTTP) form a 36; approximate repeat. One copy of the 37; approximate repeat lies at 638–645 (EKPAPTTP). The span at 653–667 (PEEPTPTTPEEPAPT) shows a compositional bias: pro residues. One copy of the 38; approximate repeat lies at 662-669 (EEPAPTTP). 9 O-linked (GalNAc...) threonine glycosylation sites follow: T676, T683, T684, T691, T692, T699, T700, T704, and T707. The span at 677-699 (PKEPAPTTPKEPAPTTPKEPAPT) shows a compositional bias: pro residues. Tandem repeats lie at residues 678-685 (KEPAPTTP), 686-693 (KEPAPTTP), and 694-701 (KEPAPTTP). Low complexity predominate over residues 700-721 (TPKETAPTTPKGTAPTTLKEPA). The stretch at 702-709 (KETAPTTP) is one 42; approximate repeat. One copy of the 43; approximate repeat lies at 710–717 (KGTAPTTL). The stretch at 718–725 (KEPAPTTP) is repeat 44. T723, T724, and T736 each carry an O-linked (GalNAc...) threonine glycan. Low complexity predominate over residues 728–761 (PAPKELAPTTTKEPTSTTSDKPAPTTPKGTAPTT). Residues 731 to 738 (KELAPTTT) form a 45; approximate repeat. The 46; approximate repeat unit spans residues 739 to 746 (KEPTSTTS). The 47; approximate repeat unit spans residues 747 to 754 (DKPAPTTP). The 48; approximate repeat unit spans residues 755–762 (KGTAPTTP). Over residues 762-776 (PKEPAPTTPKEPAPT) the composition is skewed to pro residues. 2 tandem repeats follow at residues 763 to 770 (KEPAPTTP) and 771 to 778 (KEPAPTTP). O-linked (GalNAc...) threonine glycosylation is found at T768, T769, T776, and T777. Over residues 777 to 790 (TPKGTAPTTLKEPA) the composition is skewed to low complexity. One copy of the 51; approximate repeat lies at 779–786 (KGTAPTTL). Repeat unit 52 spans residues 787–794 (KEPAPTTP). 3 O-linked (GalNAc...) threonine glycosylation sites follow: T792, T793, and T805. Residues 797 to 830 (PAPKELAPTTTKGPTSTTSDKPAPTTPKETAPTT) are compositionally biased toward low complexity. One copy of the 53; approximate repeat lies at 800–807 (KELAPTTT). Residues 808-815 (KGPTSTTS) form a 54; approximate repeat. Residue S812 is glycosylated (O-linked (GalNAc...) serine). The stretch at 816–823 (DKPAPTTP) is one 55; approximate repeat. A 56; approximate repeat occupies 824-831 (KETAPTTP). T829, T837, and T838 each carry an O-linked (GalNAc...) threonine glycan. Over residues 831–853 (PKEPAPTTPKKPAPTTPETPPPT) the composition is skewed to pro residues. 2 tandem repeats follow at residues 832–839 (KEPAPTTP) and 840–847 (KKPAPTTP). A 59; approximate repeat occupies 848–855 (ETPPPTTS). The span at 854 to 866 (TSEVSTPTTTKEP) shows a compositional bias: low complexity. The O-linked (GalNAc...) serine glycan is linked to S892. Residues 899–914 (PTTKTPAATKPEMTTT) show a composition bias toward low complexity. O-linked (GalNAc...) threonine glycosylation occurs at T900. The span at 915–926 (AKDKTTERDLRT) shows a compositional bias: basic and acidic residues. A compositionally biased stretch (low complexity) spans 927-966 (TPETTTAAPKMTKETATTTEKTTESKITATTTQVTSTTTQ). Residues T930 and T931 are each glycosylated (O-linked (GalNAc...) threonine). S962 carries O-linked (GalNAc...) serine glycosylation. T963, T968, T975, T978, T979, and T980 each carry an O-linked (GalNAc...) threonine glycan. A disordered region spans residues 992-1104 (ITTTEIMNKP…EDAGGAEGET (113 aa)). The segment covering 999–1012 (NKPEETAKPKDRAT) has biased composition (basic and acidic residues). Basic residues predominate over residues 1026-1047 (KAPKKPTSTKKPKTMPRVRKPK). O-linked (GalNAc...) threonine glycosylation occurs at T1039. The span at 1048–1060 (TTPTPRKMTSTMP) shows a compositional bias: low complexity. Over residues 1073 to 1085 (LQTTTRPNQTPNS) the composition is skewed to polar residues. A disulfide bridge connects residues C1146 and C1403. 2 Hemopexin repeats span residues 1148–1191 (GKPV…VWGI) and 1192–1239 (PSPI…FGGL). N1159 carries N-linked (GlcNAc...) asparagine glycosylation. The O-linked (GalNAc...) threonine glycan is linked to T1161.

Homodimer; disulfide-linked. Post-translationally, N-glycosylated. In terms of processing, O-glycosylated; contains glycosaminoglycan chondroitin sulfate and keratan sulfate. O-glycosylated with sialylated oligosaccharides which are predominantly represented by the monosialylated core type I structure, NeuNAcalpha2-3Galbeta1-3GalNAc, with smaller amounts of disialylated O-glycans. The disulfide bond between Cys-1146 and Cys-1403 is essential for protein cleavage. Post-translationally, proteolytically cleaved by cathepsin CTSG. In terms of tissue distribution, highly expressed in synovial tissue, cartilage and liver and weakly in heart and lung. Isoform B is expressed in kidney, lung, liver, heart and brain. Isoform C and isoform D are widely expressed.

It is found in the secreted. In terms of biological role, plays a role in boundary lubrication within articulating joints. Prevents protein deposition onto cartilage from synovial fluid by controlling adhesion-dependent synovial growth and inhibiting the adhesion of synovial cells to the cartilage surface. Its function is as follows. Isoform F plays a role as a growth factor acting on the primitive cells of both hematopoietic and endothelial cell lineages. The protein is Proteoglycan 4 (PRG4) of Homo sapiens (Human).